A 502-amino-acid chain; its full sequence is Lysine--tRNA ligase (502 aa).

Residues Glu-398 and Glu-405 each contribute to the Mg(2+) site.

It belongs to the class-II aminoacyl-tRNA synthetase family. In terms of assembly, homodimer. Requires Mg(2+) as cofactor.

It is found in the cytoplasm. The enzyme catalyses tRNA(Lys) + L-lysine + ATP = L-lysyl-tRNA(Lys) + AMP + diphosphate. In Thermotoga sp. (strain RQ2), this protein is Lysine--tRNA ligase.